The primary structure comprises 643 residues: RNA-binding protein RO60 (643 aa).

The TROVE domain occupies 63 to 473; the sequence is VENNAGGFVF…AFVNAPPTGK (411 aa). Positions 186 to 390 are RNA-binding; the sequence is RTPTHLFEFV…SMPMTAMIRN (205 aa). A VWFA-like domain region spans residues 465–643; it reads FVNAPPTGKR…IVHEFVTGKI (179 aa). A divalent metal cation contacts are provided by Ser-482, Ser-484, and Thr-549.

Belongs to the Ro 60 kDa family.

It is found in the cytoplasm. RNA-binding protein that binds to misfolded non-coding RNAs, pre-5S rRNA, and several small cytoplasmic RNA molecules known as Y RNAs. This chain is RNA-binding protein RO60, found in Caenorhabditis elegans.